The chain runs to 260 residues: Crotonyl-CoA hydratase (260 aa).

The active-site Nucleophile is the Glu-114. Glu-134 functions as the Proton acceptor in the catalytic mechanism.

This sequence belongs to the enoyl-CoA hydratase/isomerase family. As to quaternary structure, homotetramer.

Its subcellular location is the cytoplasm. The enzyme catalyses 3-hydroxybutanoyl-CoA = (2E)-butenoyl-CoA + H2O. The catalysed reaction is a short-chain (3S)-3-hydroxyacyl-CoA = a short-chain (2E)-enoyl-CoA + H2O. The protein operates within lipid metabolism; butanoate metabolism. In terms of biological role, involved in syntrophic growth of S.wolfei with butyrate, as part of the butyrate oxidation pathway. Probably catalyzes the hydration of crotonyl-CoA to 3-hydroxybutyryl-CoA. The sequence is that of Crotonyl-CoA hydratase from Syntrophomonas wolfei subsp. wolfei (strain DSM 2245B / Goettingen).